We begin with the raw amino-acid sequence, 423 residues long: Serine hydroxymethyltransferase (423 aa).

Residues L120 and 124 to 126 (GHL) each bind (6S)-5,6,7,8-tetrahydrofolate. At K229 the chain carries N6-(pyridoxal phosphate)lysine. Position 353–355 (353–355 (SPF)) interacts with (6S)-5,6,7,8-tetrahydrofolate.

Belongs to the SHMT family. As to quaternary structure, homodimer. It depends on pyridoxal 5'-phosphate as a cofactor.

Its subcellular location is the cytoplasm. The catalysed reaction is (6R)-5,10-methylene-5,6,7,8-tetrahydrofolate + glycine + H2O = (6S)-5,6,7,8-tetrahydrofolate + L-serine. The protein operates within one-carbon metabolism; tetrahydrofolate interconversion. It functions in the pathway amino-acid biosynthesis; glycine biosynthesis; glycine from L-serine: step 1/1. Its function is as follows. Catalyzes the reversible interconversion of serine and glycine with tetrahydrofolate (THF) serving as the one-carbon carrier. This reaction serves as the major source of one-carbon groups required for the biosynthesis of purines, thymidylate, methionine, and other important biomolecules. Also exhibits THF-independent aldolase activity toward beta-hydroxyamino acids, producing glycine and aldehydes, via a retro-aldol mechanism. The polypeptide is Serine hydroxymethyltransferase (Prochlorococcus marinus (strain MIT 9515)).